Reading from the N-terminus, the 192-residue chain is Probable nicotinate-nucleotide adenylyltransferase (192 aa).

This sequence belongs to the NadD family.

It catalyses the reaction nicotinate beta-D-ribonucleotide + ATP + H(+) = deamido-NAD(+) + diphosphate. It participates in cofactor biosynthesis; NAD(+) biosynthesis; deamido-NAD(+) from nicotinate D-ribonucleotide: step 1/1. Catalyzes the reversible adenylation of nicotinate mononucleotide (NaMN) to nicotinic acid adenine dinucleotide (NaAD). This chain is Probable nicotinate-nucleotide adenylyltransferase, found in Rhizobium leguminosarum bv. trifolii (strain WSM2304).